We begin with the raw amino-acid sequence, 160 residues long: Endoribonuclease YbeY (160 aa).

The Zn(2+) site is built by His123, His127, and His133.

Belongs to the endoribonuclease YbeY family. The cofactor is Zn(2+).

It is found in the cytoplasm. In terms of biological role, single strand-specific metallo-endoribonuclease involved in late-stage 70S ribosome quality control and in maturation of the 3' terminus of the 16S rRNA. The protein is Endoribonuclease YbeY of Shouchella clausii (strain KSM-K16) (Alkalihalobacillus clausii).